The following is a 278-amino-acid chain: Probable ribosomal RNA small subunit methyltransferase A (278 aa).

S-adenosyl-L-methionine is bound by residues Asn-23, Leu-25, Gly-50, Glu-71, Asp-95, and Asn-110.

Belongs to the class I-like SAM-binding methyltransferase superfamily. rRNA adenine N(6)-methyltransferase family. RsmA subfamily.

The protein resides in the cytoplasm. Functionally, specifically dimethylates two adjacent adenosines in the loop of a conserved hairpin near the 3'-end of 16S rRNA in the 30S particle. May play a critical role in biogenesis of 30S subunits. The chain is Probable ribosomal RNA small subunit methyltransferase A from Thermococcus gammatolerans (strain DSM 15229 / JCM 11827 / EJ3).